A 337-amino-acid polypeptide reads, in one-letter code: MKTATAPLPPLRSVKVLDQLRERIRYLHYSLRTEQAYVHWVRAFIRFHGVRHPATLGSSEVEAFLSWLANERKVSVSTHRQALAALLFFYGKVLCTDLPWLQEIGRPRPSRRLPVVLTPDEVVRILGFLEGEHRLFAQLLYGTGMRISEGLQLRVKDLDFDHGTIIVREGKGSKDRALMLPESLAPSLREQLSRARAWWLKDQAEGRSGVALPDALERKYPRAGHSWPWFWVFAQHTHSTDPRSGVVRRHHMYDQTFQRAFKRAVEQAGITKPATPHTLRHSFATALLRSGYDIRTVQDLLGHSDVSTTMIYTHVLKVGGAGVRSPLDALPPLTSER.

The Core-binding (CB) domain maps to 14–94 (VKVLDQLRER…ALLFFYGKVL (81 aa)). The 217-residue stretch at 112 to 328 (RLPVVLTPDE…GGAGVRSPLD (217 aa)) folds into the Tyr recombinase domain. Catalysis depends on residues Arg146, Lys171, His277, Arg280, and His303. Tyr312 serves as the catalytic O-(3'-phospho-DNA)-tyrosine intermediate.

It belongs to the 'phage' integrase family.

Its function is as follows. Putative integrase believed to be involved in the insertion of antibiotic resistance genes into plasmids and transposons. The protein is Integrase/recombinase (int) of Escherichia coli.